A 664-amino-acid chain; its full sequence is MSELLLELFSEEIPAFMQKNAEEGYLNIFTKIFEENEIFAKVQVFVGPRRITLHATHLPKITLPKEEEIKGPSIEAPEAAINGFCKAHNVSKLELPTKLISNQLYYFFVKKTEEREIKEILPEIIIEAINKYSWAKSMFWGDYKIKWIRPLRNILCIFDGEILPMQFGHLTANNITYGHRLTDNKKLEVTDFEDYRNKLLENHVILERAKREAIIKTGLLELASSHELIIKEDNRLVEEVVGLSEFPVVLLGKIPQKFLELPKEVLISSMRTHQKYFCLFDKTGNFTPYFLFVSNGRFTNAELVIQGNEKVLSARLSDALYFCKQDIAKTLESRLGQLEAVTFHAKLGNLREKIERITDICNYIAPNNKDLITAARLCKSDLVSEMVGEFPDLQGIMGYYYAKHEGLNAEIAAAIRDHYKPQGLSDNLPSGNAALLALADKLDSLVGLMIAGETPTGSGDPYALRRQALGIIRIILENKLELNFNDLINFSINLYKDSSDENKNLIISFFEERAKFYFKNDYDIALINAVLDLNLVDTNFKLDALKEFLIEDAGKQLLNAYKRASNIIGDQKITGLVDASLFSTQPEKELFEVIQKISPQIIDSIADKDYKKALNLLSSLLTPITSFFDNVLVNDSDPKIAQNRLSLLQNICELFDKVAKFNRL.

This sequence belongs to the class-II aminoacyl-tRNA synthetase family. As to quaternary structure, tetramer of two alpha and two beta subunits.

The protein localises to the cytoplasm. It catalyses the reaction tRNA(Gly) + glycine + ATP = glycyl-tRNA(Gly) + AMP + diphosphate. The polypeptide is Glycine--tRNA ligase beta subunit (Rickettsia conorii (strain ATCC VR-613 / Malish 7)).